A 582-amino-acid chain; its full sequence is Solute carrier family 15 member 3 (582 aa).

The interval 1 to 20 (MSALRAEQQPSRSGERQPLV) is disordered. Helical transmembrane passes span 33 to 53 (TAAAAVLLVEMLERAAFFGVT), 77 to 97 (LLFLGASYLLAPVGGWLADVY), 102 to 122 (LAISLSLLLYLAATGLLLTTI), and 155 to 175 (PYCATTLYLVLLLLALAASSV). N178 carries N-linked (GlcNAc...) asparagine glycosylation. A helical transmembrane segment spans residues 201-221 (WFYWSINLGAILSLLVVAFIE). N-linked (GlcNAc...) asparagine glycosylation occurs at N223. Transmembrane regions (helical) follow at residues 232-252 (IIVGLVGLAFFIFLIATPVFI) and 312-332 (FQVLLKVLPVMVTLVPYWMVY). N357 is a glycosylation site (N-linked (GlcNAc...) asparagine). Transmembrane regions (helical) follow at residues 371 to 391 (IPEAWLLLANVAVILILVPVK) and 409 to 429 (LQKMALGMFFGFTSIIVAGVL). N-linked (GlcNAc...) asparagine glycosylation is present at N440. 3 consecutive transmembrane segments (helical) span residues 466-485 (YLLIGISEIFASIPGLEFAY), 498-518 (GIFFCLSGVGSLLGSGLVALL), and 541-561 (LYFFLLAGIQAVTAVLFLWIA). N575 carries an N-linked (GlcNAc...) asparagine glycan.

Belongs to the major facilitator superfamily. Proton-dependent oligopeptide transporter (POT/PTR) (TC 2.A.17) family. Abundant expression in lung, spleen and thymus, and detected faintly in brain, liver, adrenal gland and heart at protein level.

The protein resides in the lysosome membrane. It localises to the endosome membrane. The enzyme catalyses N-acetyl-D-muramoyl-L-alanyl-D-isoglutamine(out) + n H(+)(out) = N-acetyl-D-muramoyl-L-alanyl-D-isoglutamine(in) + n H(+)(in). The catalysed reaction is glycylglycylglycine(out) + n H(+)(out) = glycylglycylglycine(in) + n H(+)(in). It carries out the reaction carnosine(out) + n H(+)(out) = carnosine(in) + n H(+)(in). It catalyses the reaction L-histidine(out) + n H(+)(out) = L-histidine(in) + n H(+)(in). Functionally, proton-coupled amino-acid transporter that transports free histidine and certain di- and tripeptides, and is involved in innate immune response. Also able to transport carnosine. Involved in the detection of microbial pathogens by toll-like receptors (TLRs) and NOD-like receptors (NLRs), probably by mediating transport of bacterial peptidoglycans across the endolysosomal membrane: catalyzes the transport of certain bacterial peptidoglycans, such as muramyl dipeptide (MDP), the NOD2 ligand. The polypeptide is Solute carrier family 15 member 3 (Slc15a3) (Rattus norvegicus (Rat)).